Reading from the N-terminus, the 49-residue chain is Large ribosomal subunit protein bL33 (49 aa).

Belongs to the bacterial ribosomal protein bL33 family.

The sequence is that of Large ribosomal subunit protein bL33 from Finegoldia magna (strain ATCC 29328 / DSM 20472 / WAL 2508) (Peptostreptococcus magnus).